A 204-amino-acid polypeptide reads, in one-letter code: Phosphatidylserine decarboxylase proenzyme (204 aa).

S169 (schiff-base intermediate with substrate; via pyruvic acid) is an active-site residue. S169 carries the post-translational modification Pyruvic acid (Ser); by autocatalysis.

The protein belongs to the phosphatidylserine decarboxylase family. PSD-A subfamily. Heterodimer of a large membrane-associated beta subunit and a small pyruvoyl-containing alpha subunit. Pyruvate serves as cofactor. In terms of processing, is synthesized initially as an inactive proenzyme. Formation of the active enzyme involves a self-maturation process in which the active site pyruvoyl group is generated from an internal serine residue via an autocatalytic post-translational modification. Two non-identical subunits are generated from the proenzyme in this reaction, and the pyruvate is formed at the N-terminus of the alpha chain, which is derived from the carboxyl end of the proenzyme. The post-translation cleavage follows an unusual pathway, termed non-hydrolytic serinolysis, in which the side chain hydroxyl group of the serine supplies its oxygen atom to form the C-terminus of the beta chain, while the remainder of the serine residue undergoes an oxidative deamination to produce ammonia and the pyruvoyl prosthetic group on the alpha chain.

Its subcellular location is the cell membrane. The catalysed reaction is a 1,2-diacyl-sn-glycero-3-phospho-L-serine + H(+) = a 1,2-diacyl-sn-glycero-3-phosphoethanolamine + CO2. It participates in phospholipid metabolism; phosphatidylethanolamine biosynthesis; phosphatidylethanolamine from CDP-diacylglycerol: step 2/2. Catalyzes the formation of phosphatidylethanolamine (PtdEtn) from phosphatidylserine (PtdSer). The chain is Phosphatidylserine decarboxylase proenzyme from Solibacter usitatus (strain Ellin6076).